We begin with the raw amino-acid sequence, 403 residues long: MTESTFPNYPRLVLSKGREKSLLRRHPWVFSGAVSRLEGKANPGETIDIVDHQGKWLARGAWSPASQIRARVWTFDKTEPVDIAFFTRRLRQAQHWRDWLAKKDGLDSYRLIAGESDGLPGVTIDRFGHFLVLQLLSAGAEYQRAALISALQTCYPDCAIYDRSDVAVRKKEGMALAQGPVTGELPPALLPIEEHGMKLLVDIQGGHKTGYYLDQRDSRLATRRYVENQRVLNCFSYTGGFAVSALMGGCRQVVSVDTSQDALDIARQNVELNQLDLSKAEFVRDDVFKLLRAYRERGEKFDVIIMDPPKFVENKSQLMGACRGYKDINMLAIQLLNPGGILLTFSCSGLMTSDLFQKIIADAAIDAGRDVQFIEQFRQAADHPVIATYPEGLYLKGFACRVM.

One can recognise a PUA domain in the interval 9-88 (YPRLVLSKGR…EPVDIAFFTR (80 aa)).

It belongs to the methyltransferase superfamily. RlmI family.

Its subcellular location is the cytoplasm. The catalysed reaction is cytidine(1962) in 23S rRNA + S-adenosyl-L-methionine = 5-methylcytidine(1962) in 23S rRNA + S-adenosyl-L-homocysteine + H(+). Its function is as follows. Specifically methylates the cytosine at position 1962 (m5C1962) of 23S rRNA. In Salmonella arizonae (strain ATCC BAA-731 / CDC346-86 / RSK2980), this protein is Ribosomal RNA large subunit methyltransferase I.